We begin with the raw amino-acid sequence, 82 residues long: Cytochrome c oxidase subunit 8, mitochondrial (82 aa).

The transit peptide at 1–31 directs the protein to the mitochondrion; sequence MFSRVALRAAPRQQPFSLVARRTFQTTRAQL. The Mitochondrial matrix segment spans residues 32 to 52; sequence SSPYHYPEGPRSNLPFNPKTR. Residues 53-75 form a helical membrane-spanning segment; the sequence is FFWFRYLMYCVVGFGSPVAIAVW. The Mitochondrial intermembrane segment spans residues 76 to 82; it reads QTYRPRS.

This sequence belongs to the cytochrome c oxidase VIIc family. In terms of assembly, component of the cytochrome c oxidase (complex IV, CIV), a multisubunit enzyme composed of 11 subunits. The complex is composed of a catalytic core of 3 subunits Cox1, Cox2 and Cox3, encoded in the mitochondrial DNA, and 8 supernumerary subunits Cox4, Cox5a/Cox5, Cox6, Cox7, Cox8, Cox7a/Cox9, Cox6b/Cox12 and Cox6a/Cox13, which are encoded in the nuclear genome. The complex exists as a monomer or a dimer and forms respiratory supercomplexes (SCs) in the inner mitochondrial membrane with NADH-ubiquinone oxidoreductase (complex I, CI) and ubiquinol-cytochrome c oxidoreductase (cytochrome b-c1 complex, complex III, CIII), resulting in various different assemblies (supercomplexes I(1)IV(1), I(1)III(3)IV(2), III(2)IV(1) and III(2)IV(2) as well as larger supercomplexes of compositions like I(1)III(2)IV(5-6)).

It is found in the mitochondrion inner membrane. It participates in energy metabolism; oxidative phosphorylation. Component of the cytochrome c oxidase, the last enzyme in the mitochondrial electron transport chain which drives oxidative phosphorylation. The respiratory chain contains 3 multisubunit complexes succinate dehydrogenase (complex II, CII), ubiquinol-cytochrome c oxidoreductase (cytochrome b-c1 complex, complex III, CIII) and cytochrome c oxidase (complex IV, CIV), that cooperate to transfer electrons derived from NADH and succinate to molecular oxygen, creating an electrochemical gradient over the inner membrane that drives transmembrane transport and the ATP synthase. Cytochrome c oxidase is the component of the respiratory chain that catalyzes the reduction of oxygen to water. Electrons originating from reduced cytochrome c in the intermembrane space (IMS) are transferred via the dinuclear copper A center (CU(A)) of Cox2 and heme A of Cox1 to the active site in Cox1, a binuclear center (BNC) formed by heme A3 and copper B (CU(B)). The BNC reduces molecular oxygen to 2 water molecules using 4 electrons from cytochrome c in the IMS and 4 protons from the mitochondrial matrix. The chain is Cytochrome c oxidase subunit 8, mitochondrial (cox-15) from Neurospora crassa (strain ATCC 24698 / 74-OR23-1A / CBS 708.71 / DSM 1257 / FGSC 987).